The sequence spans 60 residues: MPKIEVKNDDLELALKKFKRVSLEIRRLAQRHEYHLRKGMRLREKRKIAQKKRRKFRNMV.

This sequence belongs to the bacterial ribosomal protein bS21 family.

The protein is Small ribosomal subunit protein bS21 (rpsU) of Mycoplasma pneumoniae (strain ATCC 29342 / M129 / Subtype 1) (Mycoplasmoides pneumoniae).